The chain runs to 431 residues: Serine--tRNA ligase (431 aa).

L-serine is bound at residue 235–237; that stretch reads TAE. ATP is bound by residues 266 to 268 and Val-282; that span reads RRE. Glu-289 is a binding site for L-serine. 353 to 356 contributes to the ATP binding site; that stretch reads EASS. Residue Ser-389 participates in L-serine binding.

Belongs to the class-II aminoacyl-tRNA synthetase family. Type-1 seryl-tRNA synthetase subfamily. As to quaternary structure, homodimer. The tRNA molecule binds across the dimer.

The protein localises to the cytoplasm. It catalyses the reaction tRNA(Ser) + L-serine + ATP = L-seryl-tRNA(Ser) + AMP + diphosphate + H(+). The catalysed reaction is tRNA(Sec) + L-serine + ATP = L-seryl-tRNA(Sec) + AMP + diphosphate + H(+). The protein operates within aminoacyl-tRNA biosynthesis; selenocysteinyl-tRNA(Sec) biosynthesis; L-seryl-tRNA(Sec) from L-serine and tRNA(Sec): step 1/1. In terms of biological role, catalyzes the attachment of serine to tRNA(Ser). Is also able to aminoacylate tRNA(Sec) with serine, to form the misacylated tRNA L-seryl-tRNA(Sec), which will be further converted into selenocysteinyl-tRNA(Sec). The sequence is that of Serine--tRNA ligase from Chlorobium phaeobacteroides (strain DSM 266 / SMG 266 / 2430).